Here is a 231-residue protein sequence, read N- to C-terminus: Potassium/proton antiporter CemA (231 aa).

3 helical membrane-spanning segments follow: residues 9-29 (FIPL…SFLF), 116-136 (IICF…LIIL), and 191-211 (IISG…KYWI).

This sequence belongs to the CemA family.

The protein resides in the plastid. It is found in the chloroplast inner membrane. The enzyme catalyses K(+)(in) + H(+)(out) = K(+)(out) + H(+)(in). Functionally, contributes to K(+)/H(+) antiport activity by supporting proton efflux to control proton extrusion and homeostasis in chloroplasts in a light-dependent manner to modulate photosynthesis. Prevents excessive induction of non-photochemical quenching (NPQ) under continuous-light conditions. Indirectly promotes efficient inorganic carbon uptake into chloroplasts. This chain is Potassium/proton antiporter CemA, found in Manihot esculenta (Cassava).